The primary structure comprises 333 residues: Small GTPase-like protein LIP2 (333 aa).

The interval 11 to 288 (NKEHMVAPLC…YKYNTLPQHN (278 aa)) is small GTPase-like. GTP is bound by residues 29–36 (GDSGVGKS), 90–94 (DVSGH), and 160–163 (NKAD). Over residues 242–253 (SPSSAWSLSHAP) the composition is skewed to polar residues. A disordered region spans residues 242–265 (SPSSAWSLSHAPSQRLDEGTSDED).

It belongs to the small GTPase superfamily.

This is Small GTPase-like protein LIP2 from Arabidopsis thaliana (Mouse-ear cress).